The chain runs to 204 residues: Methylthioribulose-1-phosphate dehydratase (204 aa).

Zn(2+) contacts are provided by His94 and His96.

This sequence belongs to the aldolase class II family. MtnB subfamily. Zn(2+) serves as cofactor.

It catalyses the reaction 5-(methylsulfanyl)-D-ribulose 1-phosphate = 5-methylsulfanyl-2,3-dioxopentyl phosphate + H2O. It participates in amino-acid biosynthesis; L-methionine biosynthesis via salvage pathway; L-methionine from S-methyl-5-thio-alpha-D-ribose 1-phosphate: step 2/6. Functionally, catalyzes the dehydration of methylthioribulose-1-phosphate (MTRu-1-P) into 2,3-diketo-5-methylthiopentyl-1-phosphate (DK-MTP-1-P). This Pseudomonas syringae pv. syringae (strain B728a) protein is Methylthioribulose-1-phosphate dehydratase.